The primary structure comprises 439 residues: Gap junction gamma-2 protein (439 aa).

Over 1–25 the chain is Cytoplasmic; the sequence is MTNMSWSFLTRLLEEIHNHSTFVGK. A helical transmembrane segment spans residues 26–46; the sequence is VWLTVLVVFRIVLTAVGGEAI. The Extracellular segment spans residues 47–78; it reads YSDEQAKFTCNTRQPGCDNVCYDAFAPLSHVR. A helical membrane pass occupies residues 79–99; sequence FWVFQIVVISTPSVMYLGYAV. At 100–216 the chain is on the cytoplasmic side; that stretch reads HRLARASEQE…EGLMRVYVAQ (117 aa). The disordered stretch occupies residues 108–178; sequence QERRRALRRR…AEEAGAEEAC (71 aa). A compositionally biased stretch (basic residues) spans 112-125; the sequence is RALRRRPGPRRAPR. Acidic residues predominate over residues 140–174; it reads DLGEEEPMLGLGEEEEEEETGAAEGAGEEAEEAGA. A helical transmembrane segment spans residues 217–237; sequence LVARAAFEVAFLVGQYLLYGF. Residues 238-265 are Extracellular-facing; it reads EVRPFFPCSRQPCPHVVDCFVSRPTEKT. Residues 266 to 286 form a helical membrane-spanning segment; sequence VFLLVMYVVSCLCLLLNLCEM. Residues 287-439 lie on the Cytoplasmic side of the membrane; sequence AHLGLGSAQD…SRDGKTTVWI (153 aa). The interval 364-439 is disordered; the sequence is AGDRDRDSSP…SRDGKTTVWI (76 aa). S371 carries the phosphoserine modification. Low complexity predominate over residues 378 to 393; it reads PAASRGPPRAGAPASR.

This sequence belongs to the connexin family. Gamma-type subfamily. As to quaternary structure, a connexon is composed of a hexamer of connexins. Interacts with TJP1. In terms of tissue distribution, expressed in central nervous system, in sciatic nerve and sural nerve. Also detected in skeletal muscles.

Its subcellular location is the cell membrane. The protein resides in the cell junction. It is found in the gap junction. Its function is as follows. One gap junction consists of a cluster of closely packed pairs of transmembrane channels, the connexons, through which materials of low MW diffuse from one cell to a neighboring cell. May play a role in myelination in central and peripheral nervous systems. This is Gap junction gamma-2 protein (GJC2) from Homo sapiens (Human).